The sequence spans 247 residues: GYNKSLRYSRHAGTSCLIDNQHYKQIASNGKDVRRKDRRISEAKYAPLKDLANQYMVTEDPFRGPGKNVRITLFKEIRRVEPDTHKLICNWSGKEFLRETWTRFISEEFPITTDQQIMNLLFELQLRPMQPNRCYRFTMQYALGAHPDYVAHDVIRQGDPYYVGPNQIERINLSKKGYAYPLTCLQSVYNENFDFFFDEHLWPYFHRPLVYVGMNSAEIEEIMIEVSVIFKIKEFAPDVPLFTGPAY.

This sequence belongs to the polyhedrin family.

Functionally, component of the virus occlusion bodies, which are large proteinaceous structures, that protect the virus from the outside environment for extended periods until they are ingested by insect larvae. This is Granulin from Agrotis segetum granulosis virus (AsGV).